Here is a 713-residue protein sequence, read N- to C-terminus: Cytosolic endo-beta-N-acetylglucosaminidase (713 aa).

Residues 1–36 (MIARKRKSNGSETTSGKIPKDDVSSESCLDQPADES) are disordered. The region spanning 270–362 (FFDACDGFFT…DFRQNQDKFW (93 aa)) is the BRCT domain.

The protein belongs to the glycosyl hydrolase 85 family.

It is found in the cytoplasm. The protein localises to the cytosol. The catalysed reaction is an N(4)-(oligosaccharide-(1-&gt;3)-[oligosaccharide-(1-&gt;6)]-beta-D-Man-(1-&gt;4)-beta-D-GlcNAc-(1-&gt;4)-alpha-D-GlcNAc)-L-asparaginyl-[protein] + H2O = an oligosaccharide-(1-&gt;3)-[oligosaccharide-(1-&gt;6)]-beta-D-Man-(1-&gt;4)-D-GlcNAc + N(4)-(N-acetyl-beta-D-glucosaminyl)-L-asparaginyl-[protein]. In terms of biological role, endoglycosidase that releases N-glycans from glycoproteins by cleaving the beta-1,4-glycosidic bond in the N,N'-diacetylchitobiose core. Involved in the processing of free oligosaccharides in the cytosol. This is Cytosolic endo-beta-N-acetylglucosaminidase (engase) from Danio rerio (Zebrafish).